The chain runs to 329 residues: Zygote arrest protein 1 (329 aa).

2 disordered regions span residues 106–132 and 146–218; these read LRRRRQEVQTPGSPVSSGGVRFPRTQA and FREE…DDLK. The span at 149–162 shows a compositional bias: acidic residues; the sequence is EGEEEEDTDLEVTE. Residues 166–177 show a composition bias toward basic and acidic residues; sequence SAEKLESAEKNV. The segment at 231–314 adopts a 3CxxC-type zinc-finger fold; the sequence is KYGFYHCKDC…RQDLCGRCKG (84 aa).

The protein belongs to the ZAR1 family. Specifically expressed in ovaries but absent in testes.

It is found in the cytoplasm. The protein localises to the cytoplasmic ribonucleoprotein granule. Functionally, mRNA-binding protein required for maternal mRNA storage, translation and degradation during oocyte maturation. Probably promotes formation of some phase-separated membraneless compartment that stores maternal mRNAs in oocytes: acts by undergoing liquid-liquid phase separation upon binding to maternal mRNAs. Binds to the 3'-UTR of zona pellucida mRNAs, inhibiting their translation. This Danio rerio (Zebrafish) protein is Zygote arrest protein 1.